Consider the following 375-residue polypeptide: Queuine tRNA-ribosyltransferase (375 aa).

The active-site Proton acceptor is aspartate 90. Substrate-binding positions include 90–94 (DSGGF), aspartate 144, glutamine 190, and glycine 217. Residues 248–254 (GIGTPHY) form an RNA binding region. Aspartate 267 serves as the catalytic Nucleophile. An RNA binding; important for wobble base 34 recognition region spans residues 272 to 276 (ARITR). Cysteine 305, cysteine 307, cysteine 310, and histidine 336 together coordinate Zn(2+).

Belongs to the queuine tRNA-ribosyltransferase family. In terms of assembly, homodimer. Within each dimer, one monomer is responsible for RNA recognition and catalysis, while the other monomer binds to the replacement base PreQ1. Requires Zn(2+) as cofactor.

The enzyme catalyses 7-aminomethyl-7-carbaguanine + guanosine(34) in tRNA = 7-aminomethyl-7-carbaguanosine(34) in tRNA + guanine. The protein operates within tRNA modification; tRNA-queuosine biosynthesis. In terms of biological role, catalyzes the base-exchange of a guanine (G) residue with the queuine precursor 7-aminomethyl-7-deazaguanine (PreQ1) at position 34 (anticodon wobble position) in tRNAs with GU(N) anticodons (tRNA-Asp, -Asn, -His and -Tyr). Catalysis occurs through a double-displacement mechanism. The nucleophile active site attacks the C1' of nucleotide 34 to detach the guanine base from the RNA, forming a covalent enzyme-RNA intermediate. The proton acceptor active site deprotonates the incoming PreQ1, allowing a nucleophilic attack on the C1' of the ribose to form the product. After dissociation, two additional enzymatic reactions on the tRNA convert PreQ1 to queuine (Q), resulting in the hypermodified nucleoside queuosine (7-(((4,5-cis-dihydroxy-2-cyclopenten-1-yl)amino)methyl)-7-deazaguanosine). The chain is Queuine tRNA-ribosyltransferase from Borreliella burgdorferi (strain ATCC 35210 / DSM 4680 / CIP 102532 / B31) (Borrelia burgdorferi).